The chain runs to 639 residues: Homeobox protein 9 (639 aa).

6 disordered regions span residues 1–45, 66–144, 157–179, 262–313, 331–422, and 436–547; these read MLNS…DKQN, SPNH…DDNS, NQNQNQNQNQNQNQNQNQNQNQN, PRTL…SSGT, SESS…QTSN, and TNKN…NNEN. The stretch at 72-109 forms a coiled coil; it reads ANNNNNNNNNNNNNNNNNNNNNNNNNNNNNNNNNNNIQ. Composition is skewed to low complexity over residues 73–119 and 126–142; these read NNNN…SNNN and GSLNSSNDNNFNSGNDD. 2 coiled-coil regions span residues 152–184 and 230–296; these read SNQNQNQNQNQNQNQNQNQNQNQNQNQNQKDSW and EIEI…NINE. Residues 266-300 are compositionally biased toward low complexity; that stretch reads NNSSDSISENINNNNNNNNNNNNNNNNNINESNIN. The span at 345-354 shows a compositional bias: basic and acidic residues; it reads QPRKVPRDLN. Positions 358 to 399 are enriched in low complexity; sequence NNNINYANNNNNNNNNNNNNNHNNNINNNNNNNNNNNNNSNN. The stretch at 365–396 forms a coiled coil; it reads NNNNNNNNNNNNNNHNNNINNNNNNNNNNNNN. A compositionally biased stretch (polar residues) spans 405–422; sequence GSITNSVNIKPSKDQTSN. Positions 436–526 are enriched in low complexity; it reads TNKNNNNNNN…NNNLTSSSNN (91 aa). The span at 532–547 shows a compositional bias: polar residues; that stretch reads GNTSPNQSSANGNNEN. A DNA-binding region (homeobox) is located at residues 559–621; sequence KRKKRGKLPG…NARRRILPRQ (63 aa).

It localises to the nucleus. In terms of biological role, putative transcription factor. This Dictyostelium discoideum (Social amoeba) protein is Homeobox protein 9 (hbx9).